The following is a 206-amino-acid chain: Thymidylate kinase (206 aa).

An ATP-binding site is contributed by 11–18 (GIDGAGKT).

This sequence belongs to the thymidylate kinase family.

The catalysed reaction is dTMP + ATP = dTDP + ADP. Functionally, phosphorylation of dTMP to form dTDP in both de novo and salvage pathways of dTTP synthesis. In Burkholderia lata (strain ATCC 17760 / DSM 23089 / LMG 22485 / NCIMB 9086 / R18194 / 383), this protein is Thymidylate kinase.